A 342-amino-acid chain; its full sequence is Transmembrane protein 268 (342 aa).

The tract at residues 1–30 (MACEPQVDPGATGPLPPSSPGWSALPGGSP) is disordered. 2 consecutive transmembrane segments (helical) span residues 105–125 (AFAVVFYVVVWANIYSTSQMF) and 132–152 (AGMLLVTLAAVSLTLTLVLVF).

As to quaternary structure, interacts with ITGAM; this interaction inhibits ITGAM degradation via the endosome-lysosome pathway. Interacts with ITGB4; this interaction prevents ITGB4 degradation.

Its subcellular location is the cell membrane. In terms of biological role, stabilizes cell surface expression of ITGAM and participates in the adhesion and migration of phagocytes during bacterial clearance. The sequence is that of Transmembrane protein 268 from Homo sapiens (Human).